Consider the following 86-residue polypeptide: Small ribosomal subunit protein uS17 (86 aa).

The protein belongs to the universal ribosomal protein uS17 family. As to quaternary structure, part of the 30S ribosomal subunit.

In terms of biological role, one of the primary rRNA binding proteins, it binds specifically to the 5'-end of 16S ribosomal RNA. This is Small ribosomal subunit protein uS17 from Halalkalibacterium halodurans (strain ATCC BAA-125 / DSM 18197 / FERM 7344 / JCM 9153 / C-125) (Bacillus halodurans).